Here is a 465-residue protein sequence, read N- to C-terminus: Sodium-coupled neutral amino acid transporter 7 (465 aa).

A run of 11 helical transmembrane segments spans residues 54-74 (AVFI…PAAF), 82-102 (AGVT…VILA), 128-148 (ICEL…LIII), 177-197 (FTIT…KEIG), 204-224 (TLSV…YIWP), 244-264 (FNAM…VPVF), 275-295 (WWGV…GTGV), 318-338 (VAVA…YPIL), 370-390 (ILQT…IPDI), 394-414 (ISLI…LCLI), and 427-447 (SWNA…FIFG).

The protein belongs to the amino acid/polyamine transporter 2 family.

Its subcellular location is the lysosome membrane. It is found in the cell projection. It localises to the axon. The catalysed reaction is L-asparagine(in) + Na(+)(in) = L-asparagine(out) + Na(+)(out). The enzyme catalyses L-glutamine(in) + Na(+)(in) = L-glutamine(out) + Na(+)(out). Symporter that selectively cotransports sodium ions and amino acids, such as L-glutamine and L-asparagine from the lysosome into the cytoplasm and may participates in mTORC1 activation. The transport activity requires an acidic lysosomal lumen. In Danio rerio (Zebrafish), this protein is Sodium-coupled neutral amino acid transporter 7.